The sequence spans 333 residues: Holliday junction branch migration complex subunit RuvB (333 aa).

The tract at residues 1 to 182 (MDERLLSGES…FGVLSRLEYY (182 aa)) is large ATPase domain (RuvB-L). ATP contacts are provided by residues Leu-21, Arg-22, Gly-63, Lys-66, Thr-67, Thr-68, 129–131 (EDF), Arg-172, Tyr-182, and Arg-219. Thr-67 lines the Mg(2+) pocket. A small ATPAse domain (RuvB-S) region spans residues 183–253 (TVDQLSAIVE…ITQMALELLQ (71 aa)). Positions 256-333 (KLGLDHIDHK…QHFGMEMPKI (78 aa)) are head domain (RuvB-H). Arg-311 and Arg-316 together coordinate DNA.

This sequence belongs to the RuvB family. In terms of assembly, homohexamer. Forms an RuvA(8)-RuvB(12)-Holliday junction (HJ) complex. HJ DNA is sandwiched between 2 RuvA tetramers; dsDNA enters through RuvA and exits via RuvB. An RuvB hexamer assembles on each DNA strand where it exits the tetramer. Each RuvB hexamer is contacted by two RuvA subunits (via domain III) on 2 adjacent RuvB subunits; this complex drives branch migration. In the full resolvosome a probable DNA-RuvA(4)-RuvB(12)-RuvC(2) complex forms which resolves the HJ.

The protein localises to the cytoplasm. The catalysed reaction is ATP + H2O = ADP + phosphate + H(+). In terms of biological role, the RuvA-RuvB-RuvC complex processes Holliday junction (HJ) DNA during genetic recombination and DNA repair, while the RuvA-RuvB complex plays an important role in the rescue of blocked DNA replication forks via replication fork reversal (RFR). RuvA specifically binds to HJ cruciform DNA, conferring on it an open structure. The RuvB hexamer acts as an ATP-dependent pump, pulling dsDNA into and through the RuvAB complex. RuvB forms 2 homohexamers on either side of HJ DNA bound by 1 or 2 RuvA tetramers; 4 subunits per hexamer contact DNA at a time. Coordinated motions by a converter formed by DNA-disengaged RuvB subunits stimulates ATP hydrolysis and nucleotide exchange. Immobilization of the converter enables RuvB to convert the ATP-contained energy into a lever motion, pulling 2 nucleotides of DNA out of the RuvA tetramer per ATP hydrolyzed, thus driving DNA branch migration. The RuvB motors rotate together with the DNA substrate, which together with the progressing nucleotide cycle form the mechanistic basis for DNA recombination by continuous HJ branch migration. Branch migration allows RuvC to scan DNA until it finds its consensus sequence, where it cleaves and resolves cruciform DNA. This is Holliday junction branch migration complex subunit RuvB from Bacillus cytotoxicus (strain DSM 22905 / CIP 110041 / 391-98 / NVH 391-98).